A 206-amino-acid polypeptide reads, in one-letter code: MPAAPLTARAIGRIKPLLFVAGLLPFARWFWLGANDGLSANPVEFLTRSSGTWTLVCLLVTLAITPLRRLTGQPALVRLRRMCGLFAFFYGSLHFLAWVWWDRGLDPVSMLQDVGERPFITVGFAAFVLMAALAATSTQWAMRKLGKRWQVLHRAVYAIGLLAILHFWWHKAGKNDLQQPLLYGSVLALLLGWRVAAWWRRRGAAR.

A run of 6 helical transmembrane segments spans residues 14–34 (IKPL…WLGA), 45–65 (FLTR…LAIT), 82–102 (MCGL…VWWD), 118–138 (PFIT…ATST), 149–169 (WQVL…HFWW), and 179–199 (QPLL…AAWW).

Belongs to the MsrQ family. In terms of assembly, heterodimer of a catalytic subunit (MsrP) and a heme-binding subunit (MsrQ). It depends on FMN as a cofactor. Requires heme b as cofactor.

It localises to the cell inner membrane. Functionally, part of the MsrPQ system that repairs oxidized periplasmic proteins containing methionine sulfoxide residues (Met-O), using respiratory chain electrons. Thus protects these proteins from oxidative-stress damage caused by reactive species of oxygen and chlorine generated by the host defense mechanisms. MsrPQ is essential for the maintenance of envelope integrity under bleach stress, rescuing a wide series of structurally unrelated periplasmic proteins from methionine oxidation. MsrQ provides electrons for reduction to the reductase catalytic subunit MsrP, using the quinone pool of the respiratory chain. The polypeptide is Protein-methionine-sulfoxide reductase heme-binding subunit MsrQ (Bordetella bronchiseptica (strain ATCC BAA-588 / NCTC 13252 / RB50) (Alcaligenes bronchisepticus)).